Here is a 305-residue protein sequence, read N- to C-terminus: Transmembrane epididymal protein 1A (305 aa).

A helical transmembrane segment spans residues 4–24 (FIGHISPGLFLVFYGLYQAVI). Asn32 carries an N-linked (GlcNAc...) asparagine glycan. The next 5 membrane-spanning stretches (helical) occupy residues 54–74 (IAHA…YEIS), 124–144 (CVLL…LLLV), 159–179 (SLLI…LWAP), 187–207 (IETF…FILF), and 223–243 (IMFV…CMLG). The segment at 285–305 (EQQDKDDQAPLLSKISPCDRA) is disordered.

This sequence belongs to the TMEM45 family.

Its subcellular location is the membrane. The chain is Transmembrane epididymal protein 1A from Mus musculus (Mouse).